A 120-amino-acid polypeptide reads, in one-letter code: UPF0102 protein HSM_1206 (120 aa).

It belongs to the UPF0102 family.

This chain is UPF0102 protein HSM_1206, found in Histophilus somni (strain 2336) (Haemophilus somnus).